A 132-amino-acid polypeptide reads, in one-letter code: Small ribosomal subunit protein uS8 (132 aa).

It belongs to the universal ribosomal protein uS8 family. Part of the 30S ribosomal subunit. Contacts proteins S5 and S12.

In terms of biological role, one of the primary rRNA binding proteins, it binds directly to 16S rRNA central domain where it helps coordinate assembly of the platform of the 30S subunit. The polypeptide is Small ribosomal subunit protein uS8 (Rhodopseudomonas palustris (strain BisA53)).